The primary structure comprises 386 residues: S-adenosylmethionine synthase (386 aa).

Residue His17 coordinates ATP. Position 19 (Asp19) interacts with Mg(2+). Glu45 is a binding site for K(+). L-methionine contacts are provided by Glu58 and Gln101. The tract at residues 101–111 (QSPDISQGVTE) is flexible loop. ATP is bound by residues 168-170 (DAK), Asp242, 248-249 (RK), Ala265, and Lys269. Asp242 lines the L-methionine pocket. Residue Lys273 coordinates L-methionine.

This sequence belongs to the AdoMet synthase family. In terms of assembly, homotetramer; dimer of dimers. Requires Mg(2+) as cofactor. K(+) serves as cofactor.

Its subcellular location is the cytoplasm. The catalysed reaction is L-methionine + ATP + H2O = S-adenosyl-L-methionine + phosphate + diphosphate. It functions in the pathway amino-acid biosynthesis; S-adenosyl-L-methionine biosynthesis; S-adenosyl-L-methionine from L-methionine: step 1/1. Its function is as follows. Catalyzes the formation of S-adenosylmethionine (AdoMet) from methionine and ATP. The overall synthetic reaction is composed of two sequential steps, AdoMet formation and the subsequent tripolyphosphate hydrolysis which occurs prior to release of AdoMet from the enzyme. This Leptospira borgpetersenii serovar Hardjo-bovis (strain JB197) protein is S-adenosylmethionine synthase.